We begin with the raw amino-acid sequence, 146 residues long: MKKVQVKVIREEGVELPKYETEGSAGMDVRANIKESITLKSLERILVPTGLKVAIPEGYEIQVRPRSGLAIKHGITMLNTPGTVDSDYRGELKVIVVNLSNEAYTIEPNERIGQFVLNKIEQIEFVEVEELDSTERGESGFGHTGK.

Substrate is bound by residues 66-68 (RSG), Asn79, 83-85 (TVD), and Lys93.

This sequence belongs to the dUTPase family. Mg(2+) is required as a cofactor.

The catalysed reaction is dUTP + H2O = dUMP + diphosphate + H(+). Its pathway is pyrimidine metabolism; dUMP biosynthesis; dUMP from dCTP (dUTP route): step 2/2. In terms of biological role, this enzyme is involved in nucleotide metabolism: it produces dUMP, the immediate precursor of thymidine nucleotides and it decreases the intracellular concentration of dUTP so that uracil cannot be incorporated into DNA. The protein is Deoxyuridine 5'-triphosphate nucleotidohydrolase of Fusobacterium nucleatum subsp. nucleatum (strain ATCC 25586 / DSM 15643 / BCRC 10681 / CIP 101130 / JCM 8532 / KCTC 2640 / LMG 13131 / VPI 4355).